A 438-amino-acid chain; its full sequence is Probable trafficking protein particle complex subunit 13 homolog (438 aa).

This sequence belongs to the TRAPPC13 family.

This Drosophila melanogaster (Fruit fly) protein is Probable trafficking protein particle complex subunit 13 homolog.